We begin with the raw amino-acid sequence, 300 residues long: N-acetylmuramic acid 6-phosphate etherase (300 aa).

An SIS domain is found at 55 to 217 (IAERLRAGGR…STGAMIRLGK (163 aa)). The Proton donor role is filled by E83. E114 is an active-site residue.

It belongs to the GCKR-like family. MurNAc-6-P etherase subfamily. In terms of assembly, homodimer.

It carries out the reaction N-acetyl-D-muramate 6-phosphate + H2O = N-acetyl-D-glucosamine 6-phosphate + (R)-lactate. It functions in the pathway amino-sugar metabolism; N-acetylmuramate degradation. Functionally, specifically catalyzes the cleavage of the D-lactyl ether substituent of MurNAc 6-phosphate, producing GlcNAc 6-phosphate and D-lactate. The sequence is that of N-acetylmuramic acid 6-phosphate etherase from Symbiobacterium thermophilum (strain DSM 24528 / JCM 14929 / IAM 14863 / T).